A 522-amino-acid polypeptide reads, in one-letter code: 3-octaprenyl-4-hydroxybenzoate carboxy-lyase (522 aa).

Position 181 (asparagine 181) interacts with Mn(2+). Prenylated FMN is bound by residues 184–186 (IYR), 198–200 (RWL), and 203–204 (RG). Position 247 (glutamate 247) interacts with Mn(2+). Aspartate 322 functions as the Proton donor in the catalytic mechanism.

Belongs to the UbiD family. Homohexamer. The cofactor is prenylated FMN. Requires Mn(2+) as cofactor.

The protein resides in the cell membrane. It carries out the reaction a 4-hydroxy-3-(all-trans-polyprenyl)benzoate + H(+) = a 2-(all-trans-polyprenyl)phenol + CO2. It participates in cofactor biosynthesis; ubiquinone biosynthesis. Catalyzes the decarboxylation of 3-octaprenyl-4-hydroxy benzoate to 2-octaprenylphenol, an intermediate step in ubiquinone biosynthesis. The protein is 3-octaprenyl-4-hydroxybenzoate carboxy-lyase of Paraburkholderia xenovorans (strain LB400).